Consider the following 91-residue polypeptide: Small ribosomal subunit protein bS20 (91 aa).

The segment covering 1–21 (MPLHKSAEKRLRQAARRNERN) has biased composition (basic and acidic residues). The interval 1–24 (MPLHKSAEKRLRQAARRNERNRAR) is disordered.

This sequence belongs to the bacterial ribosomal protein bS20 family.

Binds directly to 16S ribosomal RNA. This is Small ribosomal subunit protein bS20 from Chlorobaculum parvum (strain DSM 263 / NCIMB 8327) (Chlorobium vibrioforme subsp. thiosulfatophilum).